The chain runs to 1712 residues: Latent-transforming growth factor beta-binding protein 1 (1712 aa).

The first 20 residues, 1-20, serve as a signal peptide directing secretion; that stretch reads MAGAWLRWGLLLWAGLLAWS. A disordered region spans residues 63-148; that stretch reads SSTATSSRSL…QDTQSSGGSR (86 aa). Polar residues predominate over residues 136–147; that stretch reads KVQQDTQSSGGS. An EGF-like 1 domain is found at 181 to 213; it reads TKPSCVPPCQNGGMCLRPQFCVCKPGTKGKACE. 3 cysteine pairs are disulfide-bonded: Cys-185/Cys-195, Cys-189/Cys-201, and Cys-203/Cys-212. N-linked (GlcNAc...) asparagine glycans are attached at residues Asn-339 and Asn-370. Positions 391–423 constitute an EGF-like 2 domain; that stretch reads RVVICHLPCMNGGQCSSRDKCQCPPNFTGKLCQ. Cystine bridges form between Cys-395–Cys-405, Cys-399–Cys-411, Cys-413–Cys-422, Cys-551–Cys-573, Cys-560–Cys-586, and Cys-574–Cys-589. A glycan (N-linked (GlcNAc...) asparagine) is linked at Asn-416. The TB 1 domain occupies 549–601; that stretch reads GRCFQETIGSQCGKALPGLSKQEDCCGTVGTSWGFNKCQKCPKKQSYHGYTQM. Residue Asn-612 is glycosylated (N-linked (GlcNAc...) asparagine). Residues 618–658 enclose the EGF-like 3; calcium-binding domain; sequence DINECQLQGVCPNGECLNTMGSYRCSCKMGFGPDPTFSSCV. 7 cysteine pairs are disulfide-bonded: Cys-622–Cys-633, Cys-628–Cys-642, Cys-644–Cys-657, Cys-671–Cys-694, Cys-681–Cys-706, Cys-695–Cys-709, and Cys-696–Cys-721. Ser-639 carries an O-linked (Glc) serine glycan. Positions 669–721 constitute a TB 2 domain; it reads GPCYRLVSPGRQCMHPLSVHLTKQICCCSVGKAWGPQCEKCPLPGTAAFKEIC. A disordered region spans residues 752–803; sequence KNTQPVAKSTHPPPLPAKEEPVEALTSSREHGPGVAEPEVVTAPPEKEIPSL. O-linked (GalNAc...) threonine glycosylation is found at Thr-761 and Thr-793. Residues 865 to 906 enclose the EGF-like 4; calcium-binding domain; the sequence is EINECTVNPDICGAGHCINLPVRYTCICYEGYKFSEQQRKCI. Intrachain disulfides connect Cys-869/Cys-881, Cys-876/Cys-890, Cys-892/Cys-905, Cys-911/Cys-923, Cys-918/Cys-932, Cys-934/Cys-947, Cys-953/Cys-964, Cys-959/Cys-973, Cys-976/Cys-988, Cys-994/Cys-1005, Cys-1000/Cys-1014, Cys-1017/Cys-1028, Cys-1034/Cys-1045, Cys-1040/Cys-1054, Cys-1056/Cys-1069, Cys-1075/Cys-1086, Cys-1081/Cys-1095, Cys-1097/Cys-1110, Cys-1116/Cys-1127, Cys-1122/Cys-1136, Cys-1138/Cys-1151, Cys-1157/Cys-1169, Cys-1164/Cys-1178, Cys-1180/Cys-1192, Cys-1198/Cys-1210, Cys-1204/Cys-1219, Cys-1221/Cys-1234, Cys-1240/Cys-1252, Cys-1246/Cys-1261, Cys-1263/Cys-1276, Cys-1282/Cys-1294, Cys-1289/Cys-1303, Cys-1305/Cys-1319, Cys-1340/Cys-1363, Cys-1350/Cys-1375, Cys-1364/Cys-1380, and Cys-1365/Cys-1392. The 42-residue stretch at 907 to 948 folds into the EGF-like 5; calcium-binding domain; that stretch reads DIDECAQAQHLCSQGRCENTEGSFLCICPAGFIASEEGSNCI. Ser-929 carries O-linked (Glc) serine glycosylation. The 41-residue stretch at 949-989 folds into the EGF-like 6; calcium-binding domain; the sequence is DVDECLRPDVCRDGRCINTAGAFRCEYCDSGYRMSRRGHCE. Residue Asn-966 is modified to (3R)-3-hydroxyasparagine. Positions 990-1029 constitute an EGF-like 7; calcium-binding domain; the sequence is DIDECLTPSTCPEEQCVNSPGSYQCVPCTEGFRGWNGQCL. O-linked (Glc) serine glycosylation occurs at Ser-1011. The EGF-like 8; calcium-binding domain maps to 1030–1070; it reads DVDECLQPKVCTNGSCTNLEGSYMCSCHKGYSPTPDHRHCQ. The N-linked (GlcNAc...) asparagine glycan is linked to Asn-1042. The O-linked (Glc) serine glycan is linked to Ser-1051. In terms of domain architecture, EGF-like 9; calcium-binding spans 1071–1111; sequence DIDECQQGNLCMNGQCKNTDGSFRCTCGQGYQLSAAKDQCE. The EGF-like 10; calcium-binding domain occupies 1112-1152; it reads DIDECEHRHLCSHGQCRNTEGSFQCLCNQGYRASVLGDHCE. A (3R)-3-hydroxyasparagine modification is found at Asn-1129. A glycan (O-linked (Glc) serine) is linked at Ser-1133. Positions 1153 to 1193 constitute an EGF-like 11; calcium-binding domain; the sequence is DINECLEDSSVCQGGDCINTAGSYDCTCPDGLQLNDNKGCQ. The EGF-like 12; calcium-binding domain occupies 1194–1235; the sequence is DINECAQPGLCAPHGECLNTQGSFHCVCEQGFSISADGRTCE. The O-linked (Glc) serine glycan is linked to Ser-1216. Positions 1236–1277 constitute an EGF-like 13; calcium-binding domain; the sequence is DIDECVNNTVCDSHGFCDNTAGSFRCLCYQGFQAPQDGQGCV. Asn-1242 is a glycosylation site (N-linked (GlcNAc...) asparagine). The EGF-like 14; calcium-binding domain maps to 1278–1320; that stretch reads DVNECELLSGVCGEAFCENVEGSFLCVCADENQEYSPMTGQCR. The 8-Cys3 region stretch occupies residues 1335-1402; the sequence is EEKKECYYNL…PRGKGFVPAG (68 aa). The TB 3 domain occupies 1338–1392; sequence KECYYNLNDASLCDNVLAPNVTKQECCCTSGAGWGDNCEIFPCPVQGTAEFSEMC. N-linked (GlcNAc...) asparagine glycosylation occurs at Asn-1357. Ser-1405 carries the phosphoserine modification. The EGF-like 15; calcium-binding domain occupies 1415 to 1457; sequence DADECLLFGEEICKNGYCLNTQPGYECYCKEGTYYDPVKLQCF. Disulfide bonds link Cys-1419-Cys-1432, Cys-1427-Cys-1441, Cys-1443-Cys-1456, Cys-1462-Cys-1473, Cys-1468-Cys-1482, Cys-1484-Cys-1497, Cys-1517-Cys-1541, Cys-1527-Cys-1553, Cys-1542-Cys-1556, and Cys-1543-Cys-1568. The EGF-like 16; calcium-binding domain occupies 1458–1498; the sequence is DMDECQDPNSCIDGQCVNTEGSYNCFCTHPMVLDASEKRCV. Residue Ser-1479 is glycosylated (O-linked (Glc) serine). The segment at 1498 to 1712 is C-terminal domain; that stretch reads VQPTESNEQI…LNLDKDSDLE (215 aa). One can recognise a TB 4 domain in the interval 1515-1568; the sequence is DLCWEHLSEEYVCSRPLVGKQTTYTECCCLYGEAWGMQCALCPMKDSDDYAQLC. Residues Ser-1588 and Ser-1607 each carry the phosphoserine modification. Residues 1612-1652 enclose the EGF-like 17 domain; that stretch reads QAEECGILNGCENGRCVRVQEGYTCDCFDGYHLDMAKMTCV. 6 cysteine pairs are disulfide-bonded: Cys-1616/Cys-1627, Cys-1622/Cys-1636, Cys-1638/Cys-1651, Cys-1657/Cys-1672, Cys-1667/Cys-1681, and Cys-1683/Cys-1696. Positions 1653 to 1697 constitute an EGF-like 18; calcium-binding domain; the sequence is DVNECSELNNRMSLCKNAKCINTEGSYKCVCLPGYVPSDKPNYCT. O-linked (Glc) serine glycosylation occurs at Ser-1678.

The protein belongs to the LTBP family. Interacts with TGFB1; associates via disulfide bonds with the Latency-associated peptide chain (LAP) regulatory chain of TGFB1, leading to regulate activation of TGF-beta-1. LTBP1 does not bind directly to TGF-beta-1, the active chain of TGFB1. Interacts (via C-terminal domain) with FBN1 (via N-terminal domain). Interacts with FBN2. Interacts with ADAMTSL2. Interacts with EFEMP2. Post-translationally, contains hydroxylated asparagine residues. Two intrachain disulfide bonds from the TB3 domain are rearranged upon TGFB1 binding, and form interchain bonds with TGFB1 propeptide, anchoring it to the extracellular matrix. In terms of processing, O-glycosylated on serine residues by POGLUT2 and POGLUT3.

It localises to the secreted. The protein resides in the extracellular space. It is found in the extracellular matrix. Its function is as follows. Key regulator of transforming growth factor beta (TGFB1, TGFB2 and TGFB3) that controls TGF-beta activation by maintaining it in a latent state during storage in extracellular space. Associates specifically via disulfide bonds with the Latency-associated peptide (LAP), which is the regulatory chain of TGF-beta, and regulates integrin-dependent activation of TGF-beta. Outcompeted by LRRC32/GARP for binding to LAP regulatory chain of TGF-beta. This chain is Latent-transforming growth factor beta-binding protein 1 (Ltbp1), found in Rattus norvegicus (Rat).